We begin with the raw amino-acid sequence, 282 residues long: Ribosomal RNA small subunit methyltransferase I (282 aa).

The protein belongs to the methyltransferase superfamily. RsmI family.

The protein resides in the cytoplasm. It catalyses the reaction cytidine(1402) in 16S rRNA + S-adenosyl-L-methionine = 2'-O-methylcytidine(1402) in 16S rRNA + S-adenosyl-L-homocysteine + H(+). Functionally, catalyzes the 2'-O-methylation of the ribose of cytidine 1402 (C1402) in 16S rRNA. This chain is Ribosomal RNA small subunit methyltransferase I, found in Pseudomonas aeruginosa (strain ATCC 15692 / DSM 22644 / CIP 104116 / JCM 14847 / LMG 12228 / 1C / PRS 101 / PAO1).